A 261-amino-acid chain; its full sequence is 5'-nucleotidase SurE (261 aa).

A divalent metal cation contacts are provided by Asp8, Asp9, Ser39, and Asn91.

This sequence belongs to the SurE nucleotidase family. A divalent metal cation serves as cofactor.

The protein localises to the cytoplasm. The catalysed reaction is a ribonucleoside 5'-phosphate + H2O = a ribonucleoside + phosphate. In terms of biological role, nucleotidase that shows phosphatase activity on nucleoside 5'-monophosphates. The sequence is that of 5'-nucleotidase SurE from Polaromonas sp. (strain JS666 / ATCC BAA-500).